Consider the following 687-residue polypeptide: Glycine--tRNA ligase beta subunit (687 aa).

It belongs to the class-II aminoacyl-tRNA synthetase family. In terms of assembly, tetramer of two alpha and two beta subunits.

Its subcellular location is the cytoplasm. It catalyses the reaction tRNA(Gly) + glycine + ATP = glycyl-tRNA(Gly) + AMP + diphosphate. The protein is Glycine--tRNA ligase beta subunit of Neisseria meningitidis serogroup C / serotype 2a (strain ATCC 700532 / DSM 15464 / FAM18).